We begin with the raw amino-acid sequence, 489 residues long: COX3 mRNA-specific translational activator PET494 (489 aa).

It is found in the mitochondrion inner membrane. In terms of biological role, required for the expression of the mitochondrial gene for cytochrome c oxidase subunit III (COX3). This chain is COX3 mRNA-specific translational activator PET494 (PET494), found in Saccharomyces cerevisiae (strain ATCC 204508 / S288c) (Baker's yeast).